The sequence spans 158 residues: Methylated-DNA--protein-cysteine methyltransferase (158 aa).

Cys-126 acts as the Nucleophile; methyl group acceptor in catalysis.

This sequence belongs to the MGMT family.

It localises to the cytoplasm. The catalysed reaction is a 6-O-methyl-2'-deoxyguanosine in DNA + L-cysteinyl-[protein] = S-methyl-L-cysteinyl-[protein] + a 2'-deoxyguanosine in DNA. The enzyme catalyses a 4-O-methyl-thymidine in DNA + L-cysteinyl-[protein] = a thymidine in DNA + S-methyl-L-cysteinyl-[protein]. Involved in the cellular defense against the biological effects of O6-methylguanine (O6-MeG) and O4-methylthymine (O4-MeT) in DNA. Repairs the methylated nucleobase in DNA by stoichiometrically transferring the methyl group to a cysteine residue in the enzyme. This is a suicide reaction: the enzyme is irreversibly inactivated. The protein is Methylated-DNA--protein-cysteine methyltransferase of Methanosarcina mazei (strain ATCC BAA-159 / DSM 3647 / Goe1 / Go1 / JCM 11833 / OCM 88) (Methanosarcina frisia).